We begin with the raw amino-acid sequence, 104 residues long: Co-chaperonin GroES 3 (104 aa).

This sequence belongs to the GroES chaperonin family. In terms of assembly, heptamer of 7 subunits arranged in a ring. Interacts with the chaperonin GroEL.

The protein localises to the cytoplasm. In terms of biological role, together with the chaperonin GroEL, plays an essential role in assisting protein folding. The GroEL-GroES system forms a nano-cage that allows encapsulation of the non-native substrate proteins and provides a physical environment optimized to promote and accelerate protein folding. GroES binds to the apical surface of the GroEL ring, thereby capping the opening of the GroEL channel. The sequence is that of Co-chaperonin GroES 3 from Bradyrhizobium diazoefficiens (strain JCM 10833 / BCRC 13528 / IAM 13628 / NBRC 14792 / USDA 110).